Reading from the N-terminus, the 55-residue chain is ATP synthase small subunit 6, mitochondrial (55 aa).

Residues 1 to 15 constitute a mitochondrion transit peptide; the sequence is MRQFDPWPVFFRREW. The chain crosses the membrane as a helical span at residues 20–39; the sequence is PFLVGFAVTGAIITKMSLGF.

The protein belongs to the ATPase 6 subunit family.

Its subcellular location is the mitochondrion inner membrane. Functionally, mitochondrial membrane ATP synthase (F(1)F(0) ATP synthase or Complex V) produces ATP from ADP in the presence of a proton gradient across the membrane which is generated by electron transport complexes of the respiratory chain. F-type ATPases consist of two structural domains, F(1) - containing the extramembraneous catalytic core and F(0) - containing the membrane proton channel, linked together by a central stalk and a peripheral stalk. During catalysis, ATP synthesis in the catalytic domain of F(1) is coupled via a rotary mechanism of the central stalk subunits to proton translocation. Part of the complex F(0) domain. Confers tolerance to several abiotic stresses (e.g. salt, mannitol, drought, oxidative and cold stresses), probably by providing additional energy needed for cell homeostasis. In Solanum tuberosum (Potato), this protein is ATP synthase small subunit 6, mitochondrial.